The chain runs to 195 residues: Interferon tau-1 (195 aa).

Residues 1 to 23 (MAFVLSLLMALVLVSYGPGRSLG) form the signal peptide. 2 disulfides stabilise this stretch: Cys24-Cys122 and Cys52-Cys162. The N-linked (GlcNAc...) asparagine glycan is linked to Asn101.

It belongs to the alpha/beta interferon family. IFN-alphaII subfamily. Constitutively and exclusively expressed in the mononuclear cells of the extraembryonic trophectoderm.

It is found in the secreted. In terms of biological role, paracrine hormone primarily responsible for maternal recognition of pregnancy. Interacts with endometrial receptors, probably type I interferon receptors, and blocks estrogen receptor expression, preventing the estrogen-induced increase in oxytocin receptor expression in the endometrium. This results in the suppression of the pulsatile endometrial release of the luteolytic hormone prostaglandin F2-alpha, hindering the regression of the corpus luteum (luteolysis) and therefore a return to ovarian cyclicity. This, and a possible direct effect of IFN-tau on prostaglandin synthesis, leads in turn to continued ovarian progesterone secretion, which stimulates the secretion by the endometrium of the nutrients required for the growth of the conceptus. In summary, displays particularly high antiviral and antiproliferative potency concurrently with particular weak cytotoxicity, high antiluteolytic activity and immunomodulatory properties. In contrast with other IFNs, IFN-tau is not virally inducible. This Bos taurus (Bovine) protein is Interferon tau-1 (IFNT1).